The chain runs to 170 residues: Ureidoglycolate lyase (170 aa).

The protein belongs to the ureidoglycolate lyase family. In terms of assembly, homodimer. Ni(2+) serves as cofactor.

It catalyses the reaction (S)-ureidoglycolate = urea + glyoxylate. The protein operates within nitrogen metabolism; (S)-allantoin degradation. Functionally, catalyzes the catabolism of the allantoin degradation intermediate (S)-ureidoglycolate, generating urea and glyoxylate. Involved in the utilization of allantoin as nitrogen source. This chain is Ureidoglycolate lyase, found in Pseudomonas savastanoi pv. phaseolicola (strain 1448A / Race 6) (Pseudomonas syringae pv. phaseolicola (strain 1448A / Race 6)).